Here is a 980-residue protein sequence, read N- to C-terminus: Macrophage colony-stimulating factor 1 receptor (980 aa).

Positions Met1 to Gly19 are cleaved as a signal peptide. The Extracellular portion of the chain corresponds to Val20–Pro514. Ig-like C2-type domains follow at residues Pro21–Tyr100, Pro107–Lys197, Pro202–Glu297, Ala299–Arg397, and Pro400–Ser499. A disulfide bridge links Cys42 with Cys84. N-linked (GlcNAc...) asparagine glycosylation is found at Asn45, Asn73, Asn94, Asn153, Asn275, Asn286, Asn302, Asn335, Asn410, Asn477, and Asn490. 2 disulfides stabilise this stretch: Cys127–Cys177 and Cys224–Cys278. A disulfide bridge links Cys417 with Cys482. A helical transmembrane segment spans residues Val515–Tyr535. The Cytoplasmic segment spans residues Lys536–Cys980. The segment at Gln539–Lys571 is regulatory juxtamembrane domain. Phosphotyrosine; by autocatalysis is present on residues Tyr543 and Tyr558. A Protein kinase domain is found at Leu579–Leu908. ATP contacts are provided by residues Leu585–Val593 and Lys613. Phosphotyrosine; by autocatalysis is present on residues Tyr696 and Tyr705. Ser710 is subject to Phosphoserine. Tyr720 is subject to Phosphotyrosine; by autocatalysis. Positions Met723–Glu743 are disordered. Catalysis depends on Asp776, which acts as the Proton acceptor. The segment at Asp794–Pro816 is activation loop. 2 positions are modified to phosphotyrosine; by autocatalysis: Tyr807 and Tyr921. The interval Val918–Leu959 is disordered. A compositionally biased stretch (low complexity) spans Ser926–Thr940. Phosphotyrosine; by autocatalysis is present on Tyr977.

This sequence belongs to the protein kinase superfamily. Tyr protein kinase family. CSF-1/PDGF receptor subfamily. Monomer. Homodimer. Interacts with CSF1 and IL34. Interaction with dimeric CSF1 or IL34 leads to receptor homodimerization. Interacts with INPPL1/SHIP2 and THOC5. Interacts (tyrosine phosphorylated) with PLCG2 (via SH2 domain). Interacts (tyrosine phosphorylated) with PIK3R1 (via SH2 domain). Interacts (tyrosine phosphorylated) with FYN, YES1 and SRC (via SH2 domain). Interacts (tyrosine phosphorylated) with CBL, GRB2 and SLA2. Post-translationally, autophosphorylated in response to CSF1 or IL34 binding. Phosphorylation at Tyr-558 is important for normal down-regulation of signaling by ubiquitination, internalization and degradation. Phosphorylation at Tyr-558 and Tyr-807 is important for interaction with SRC family members, including FYN, YES1 and SRC, and for subsequent activation of these protein kinases. Phosphorylation at Tyr-696 and Tyr-921 is important for interaction with GRB2. Phosphorylation at Tyr-720 is important for interaction with PIK3R1. Phosphorylation at Tyr-720 and Tyr-807 is important for interaction with PLCG2. Phosphorylation at Tyr-977 is important for interaction with CBL. Dephosphorylation by PTPN2 negatively regulates downstream signaling and macrophage differentiation. Ubiquitinated. Becomes rapidly polyubiquitinated after autophosphorylation, leading to its degradation.

It localises to the cell membrane. It catalyses the reaction L-tyrosyl-[protein] + ATP = O-phospho-L-tyrosyl-[protein] + ADP + H(+). Present in an inactive conformation in the absence of bound ligand. CSF1 or IL34 binding leads to dimerization and activation by autophosphorylation on tyrosine residues. In terms of biological role, tyrosine-protein kinase that acts as a cell-surface receptor for CSF1 and IL34 and plays an essential role in the regulation of survival, proliferation and differentiation of hematopoietic precursor cells, especially mononuclear phagocytes, such as macrophages and monocytes. Promotes the release of pro-inflammatory chemokines in response to IL34 and CSF1, and thereby plays an important role in innate immunity and in inflammatory processes. Plays an important role in the regulation of osteoclast proliferation and differentiation, the regulation of bone resorption, and is required for normal bone and tooth development. Required for normal male and female fertility, and for normal development of milk ducts and acinar structures in the mammary gland during pregnancy. Promotes reorganization of the actin cytoskeleton, regulates formation of membrane ruffles, cell adhesion and cell migration, and promotes cancer cell invasion. Activates several signaling pathways in response to ligand binding, including the ERK1/2 and the JNK pathway. Phosphorylates PIK3R1, PLCG2, GRB2, SLA2 and CBL. Activation of PLCG2 leads to the production of the cellular signaling molecules diacylglycerol and inositol 1,4,5-trisphosphate, that then lead to the activation of protein kinase C family members, especially PRKCD. Phosphorylation of PIK3R1, the regulatory subunit of phosphatidylinositol 3-kinase, leads to activation of the AKT1 signaling pathway. Activated CSF1R also mediates activation of the MAP kinases MAPK1/ERK2 and/or MAPK3/ERK1, and of the SRC family kinases SRC, FYN and YES1. Activated CSF1R transmits signals both via proteins that directly interact with phosphorylated tyrosine residues in its intracellular domain, or via adapter proteins, such as GRB2. Promotes activation of STAT family members STAT3, STAT5A and/or STAT5B. Promotes tyrosine phosphorylation of SHC1 and INPP5D/SHIP-1. Receptor signaling is down-regulated by protein phosphatases, such as INPP5D/SHIP-1, that dephosphorylate the receptor and its downstream effectors, and by rapid internalization of the activated receptor. In the central nervous system, may play a role in the development of microglia macrophages. The sequence is that of Macrophage colony-stimulating factor 1 receptor (CSF1R) from Felis catus (Cat).